The sequence spans 229 residues: Potassium/proton antiporter CemA (229 aa).

The next 4 helical transmembrane spans lie at 11–31, 118–138, 158–178, and 190–210; these read TTPF…SLFF, IISF…LVIL, LLAL…ELLI, and LLVC…TFNY.

This sequence belongs to the CemA family.

Its subcellular location is the plastid. It localises to the chloroplast inner membrane. The catalysed reaction is K(+)(in) + H(+)(out) = K(+)(out) + H(+)(in). In terms of biological role, contributes to K(+)/H(+) antiport activity by supporting proton efflux to control proton extrusion and homeostasis in chloroplasts in a light-dependent manner to modulate photosynthesis. Prevents excessive induction of non-photochemical quenching (NPQ) under continuous-light conditions. Indirectly promotes efficient inorganic carbon uptake into chloroplasts. This chain is Potassium/proton antiporter CemA, found in Pelargonium hortorum (Common geranium).